A 247-amino-acid chain; its full sequence is 4-nitrobenzoate reductase (247 aa).

29–33 (RRSVR) contacts FMN. NADP(+) is bound by residues Ser59, Arg112, Tyr120, and Leu126. An FMN-binding site is contributed by Arg232.

Belongs to the nitroreductase family. FMN serves as cofactor.

The catalysed reaction is 4-nitrobenzoate + 2 NADPH + 2 H(+) = 4-hydroxylaminobenzoate + 2 NADP(+) + H2O. Its function is as follows. Nitroreductase involved in the degradation of nitroaromatic compounds. Catalyzes the conversion of 4-nitrobenzoate to 4-hydroxylaminobenzoate. The chain is 4-nitrobenzoate reductase from Nocardioides sp. (strain LMS-CY).